We begin with the raw amino-acid sequence, 183 residues long: Pyruvoyl-dependent arginine decarboxylase 2 (183 aa).

Position 41 is a pyruvic acid (Ser) (S41).

The protein belongs to the PdaD family. Pyruvate serves as cofactor.

The enzyme catalyses L-arginine + H(+) = agmatine + CO2. This chain is Pyruvoyl-dependent arginine decarboxylase 2 (pdaD2), found in Methanosarcina acetivorans (strain ATCC 35395 / DSM 2834 / JCM 12185 / C2A).